The primary structure comprises 833 residues: MGSDKRVSRSERSGRYGSGFDRDDRDDRDNRSRRRDSEYKRYRDERSDRYDDYRDYDSPERDRMRDRERRNSDRSEDGYHSDGDYMDHDYRQDYYMDEKESKTIMLRGLPININENDIRELVESFEGPQPADVRLMKRKTGLSRGFAFVEFYHLQDSTSWMEANQKKLVIQGKTIAMHYSNPRPKFEDWLCNKCGLYNFRRRLKCFRCGAAKAESDMEAPSGSSEAPQSADYYSDSGYVSSAIILRNIGPHTVVDSILSALAPYVSLVVSNIRLIKDKQTQQNRGFAFVQLPSALEASQLLQILQTLHPPLKIDGKTIGVDFAKSARKDLVLPDGHRVSAFSVASTAIAAAQWSSTQPAQQSGEGGDYAYLQPGQEGCSNYGQCSQDYQPFYQTQTGAAEQGTAPQAESSSPVPATTSAVVCQSPQMYQQPGSPTQSSTSTVAASATPASGTSAEEAAAPNAIVPGLKYSVPDTSTYQYDESSGYYYDPQTGLYYDPNSQYYYNSLTQQYLYWDGEKQTYLPAADGAGQSGTQPNGANPGTSKEGKEKKEKPKSKTAQQIAKDMERWAKSLNKQKENFKNSFQPLRDEERKESAAADAGFALFEKKQGSLLERQFLPDMMMMVNTEEEKPPNTALVAAYSGDSDNEEENERFIGAVDDEKLMDWKKLACLLCRRQFPNKDALTRHQQLSDLHKQNLEVYRRSKLSEQEYEAEQTERESKYRDRAAERRVKYGIPEPPEPKRKRFAPTVVNYEQPTKDGIDNSNIGNKMLQAMGWKEGSGLGRKSQGITAPIQAQVRMRGAGLGAKGSSYGVNTSDSYKDAVRKAMFARFSEME.

A disordered region spans residues 1 to 87 (MGSDKRVSRS…GYHSDGDYMD (87 aa)). An RRM 1 domain is found at 102–182 (KTIMLRGLPI…KTIAMHYSNP (81 aa)). The segment at 185-214 (KFEDWLCNKCGLYNFRRRLKCFRCGAAKAE) adopts a RanBP2-type zinc-finger fold. An RRM 2 domain is found at 241 to 325 (SAIILRNIGP…KTIGVDFAKS (85 aa)). Over residues 396–428 (TGAAEQGTAPQAESSSPVPATTSAVVCQSPQMY) the composition is skewed to polar residues. Disordered regions lie at residues 396-458 (TGAA…EEAA) and 523-559 (AADG…TAQQ). The segment covering 429–458 (QQPGSPTQSSTSTVAASATPASGTSAEEAA) has biased composition (low complexity). The C2H2-type zinc-finger motif lies at 667–692 (LACLLCRRQFPNKDALTRHQQLSDLH). A G-patch domain is found at 761–807 (NSNIGNKMLQAMGWKEGSGLGRKSQGITAPIQAQVRMRGAGLGAKGS).

The protein belongs to the RBM5/RBM10 family. In terms of assembly, component of the spliceosome A complex (also known as the prespliceosome). Appears to dissociate from the spliceosome upon formation of the spliceosome B complex (also known as the precatalytic spliceosome), in which the heterotrimeric U4/U6.U5 snRNPs are bound.

The protein resides in the nucleus. Its function is as follows. Component of the spliceosome A complex. Regulates alternative splicing of a number of mRNAs. May modulate splice site pairing after recruitment of the U1 and U2 snRNPs to the 5' and 3' splice sites of the intron. In Xenopus laevis (African clawed frog), this protein is RNA-binding protein 5-A (rbm5-a).